The following is a 252-amino-acid chain: Diphthine synthase (252 aa).

Residues Leu-9, Asp-85, Val-88, 113–114 (SI), Leu-165, Ala-204, and His-229 each bind S-adenosyl-L-methionine.

This sequence belongs to the diphthine synthase family. In terms of assembly, homodimer.

It catalyses the reaction 2-[(3S)-amino-3-carboxypropyl]-L-histidyl-[translation elongation factor 2] + 3 S-adenosyl-L-methionine = diphthine-[translation elongation factor 2] + 3 S-adenosyl-L-homocysteine + 3 H(+). It functions in the pathway protein modification; peptidyl-diphthamide biosynthesis. Functionally, S-adenosyl-L-methionine-dependent methyltransferase that catalyzes the trimethylation of the amino group of the modified target histidine residue in translation elongation factor 2 (EF-2), to form an intermediate called diphthine. The three successive methylation reactions represent the second step of diphthamide biosynthesis. This chain is Diphthine synthase, found in Methanocorpusculum labreanum (strain ATCC 43576 / DSM 4855 / Z).